A 416-amino-acid polypeptide reads, in one-letter code: Protein P47 (416 aa).

It belongs to the TULIP P47 family. In terms of assembly, part of a crude toxin extract that includes BoNTA2/NTNH, P47, OrfX2 and OrfX3; OrfX1 was not detected.

Part of a botulinum neurotoxin type A2 (BoNT) locus; may be part of a progenitor toxin complex required to protect BoNT during its passage through the host gastrointestinal tract. The polypeptide is Protein P47 (Clostridium botulinum (strain Kyoto / Type A2)).